The chain runs to 296 residues: Nucleotide-binding protein SGO_0954 (296 aa).

13 to 20 (GMSGAGKT) contributes to the ATP binding site. Position 63–66 (63–66 (DMRS)) interacts with GTP.

It belongs to the RapZ-like family.

Its function is as follows. Displays ATPase and GTPase activities. In Streptococcus gordonii (strain Challis / ATCC 35105 / BCRC 15272 / CH1 / DL1 / V288), this protein is Nucleotide-binding protein SGO_0954.